Here is a 398-residue protein sequence, read N- to C-terminus: Elongation factor Tu (398 aa).

The 198-residue stretch at 10–207 folds into the tr-type G domain; it reads KPHVNIGTIG…TVDEYIPEPE (198 aa). The interval 19 to 26 is G1; that stretch reads GHVDHGKT. 19-26 serves as a coordination point for GTP; sequence GHVDHGKT. Mg(2+) is bound at residue Thr26. Positions 63–67 are G2; it reads GITIN. Residues 84 to 87 are G3; it reads DAPG. Residues 84-88 and 139-142 contribute to the GTP site; these read DAPGH and NKVD. Positions 139-142 are G4; it reads NKVD. Residues 177 to 179 are G5; the sequence is SAL.

This sequence belongs to the TRAFAC class translation factor GTPase superfamily. Classic translation factor GTPase family. EF-Tu/EF-1A subfamily. In terms of assembly, monomer.

The protein resides in the cytoplasm. The catalysed reaction is GTP + H2O = GDP + phosphate + H(+). Functionally, GTP hydrolase that promotes the GTP-dependent binding of aminoacyl-tRNA to the A-site of ribosomes during protein biosynthesis. The chain is Elongation factor Tu from Streptococcus thermophilus (strain CNRZ 1066).